The chain runs to 170 residues: Photosystem II extrinsic protein V (170 aa).

Residues 1-33 form the signal peptide; it reads MASLFSTLQRSLKGLLILVPVLIGLVLASPAEA. Heme c-binding residues include cysteine 70, cysteine 73, histidine 74, and methionine 137.

This sequence belongs to the cytochrome c family. PsbV subfamily. In terms of assembly, PSII is composed of 1 copy each of membrane proteins PsbA, PsbB, PsbC, PsbD, PsbE, PsbF, PsbH, PsbI, PsbJ, PsbK, PsbL, PsbM, PsbT, PsbX, PsbY, PsbZ, Psb30/Ycf12, peripheral proteins PsbO, CyanoQ (PsbQ), PsbU, PsbV and a large number of cofactors. It forms dimeric complexes. Requires heme c as cofactor.

The protein resides in the cellular thylakoid membrane. Functionally, one of the extrinsic, lumenal subunits of photosystem II (PSII). PSII is a light-driven water plastoquinone oxidoreductase, using light energy to abstract electrons from H(2)O, generating a proton gradient subsequently used for ATP formation. The extrinsic proteins stabilize the structure of photosystem II oxygen-evolving complex (OEC), the ion environment of oxygen evolution and protect the OEC against heat-induced inactivation. Low-potential cytochrome c that plays a role in the OEC of PSII. The polypeptide is Photosystem II extrinsic protein V (Parasynechococcus marenigrum (strain WH8102)).